The following is a 176-amino-acid chain: ATP-dependent protease subunit HslV (176 aa).

Threonine 5 is an active-site residue. Na(+) contacts are provided by serine 161, cysteine 164, and threonine 167.

The protein belongs to the peptidase T1B family. HslV subfamily. As to quaternary structure, a double ring-shaped homohexamer of HslV is capped on each side by a ring-shaped HslU homohexamer. The assembly of the HslU/HslV complex is dependent on binding of ATP.

It is found in the cytoplasm. It carries out the reaction ATP-dependent cleavage of peptide bonds with broad specificity.. Its activity is regulated as follows. Allosterically activated by HslU binding. In terms of biological role, protease subunit of a proteasome-like degradation complex believed to be a general protein degrading machinery. This is ATP-dependent protease subunit HslV from Caldanaerobacter subterraneus subsp. tengcongensis (strain DSM 15242 / JCM 11007 / NBRC 100824 / MB4) (Thermoanaerobacter tengcongensis).